We begin with the raw amino-acid sequence, 226 residues long: ATP synthase F(0) complex subunit a (226 aa).

The next 6 membrane-spanning stretches (helical) occupy residues 9 to 29 (FITPTMMGLPIVILVIVFPAM), 68 to 88 (WALMLISLILFIGSTNLLGLV), 97 to 117 (QLSMNLGMAIPLWAGAVITGF), 138 to 158 (IPMLVVIETISLFIQPMALAI), 164 to 184 (ITAGHLLMHLIGGAVLALTSI), and 201 to 223 (ILEFAVALIQAYVFTLLVSLYLH).

Belongs to the ATPase A chain family. Component of the ATP synthase complex composed at least of ATP5F1A/subunit alpha, ATP5F1B/subunit beta, ATP5MC1/subunit c (homooctomer), MT-ATP6/subunit a, MT-ATP8/subunit 8, ATP5ME/subunit e, ATP5MF/subunit f, ATP5MG/subunit g, ATP5MK/subunit k, ATP5MJ/subunit j, ATP5F1C/subunit gamma, ATP5F1D/subunit delta, ATP5F1E/subunit epsilon, ATP5PF/subunit F6, ATP5PB/subunit b, ATP5PD/subunit d, ATP5PO/subunit OSCP. ATP synthase complex consists of a soluble F(1) head domain (subunits alpha(3) and beta(3)) - the catalytic core - and a membrane F(0) domain - the membrane proton channel (subunits c, a, 8, e, f, g, k and j). These two domains are linked by a central stalk (subunits gamma, delta, and epsilon) rotating inside the F1 region and a stationary peripheral stalk (subunits F6, b, d, and OSCP). Interacts with DNAJC30; interaction is direct.

Its subcellular location is the mitochondrion inner membrane. The catalysed reaction is H(+)(in) = H(+)(out). Subunit a, of the mitochondrial membrane ATP synthase complex (F(1)F(0) ATP synthase or Complex V) that produces ATP from ADP in the presence of a proton gradient across the membrane which is generated by electron transport complexes of the respiratory chain. ATP synthase complex consist of a soluble F(1) head domain - the catalytic core - and a membrane F(1) domain - the membrane proton channel. These two domains are linked by a central stalk rotating inside the F(1) region and a stationary peripheral stalk. During catalysis, ATP synthesis in the catalytic domain of F(1) is coupled via a rotary mechanism of the central stalk subunits to proton translocation. With the subunit c (ATP5MC1), forms the proton-conducting channel in the F(0) domain, that contains two crucial half-channels (inlet and outlet) that facilitate proton movement from the mitochondrial intermembrane space (IMS) into the matrix. Protons are taken up via the inlet half-channel and released through the outlet half-channel, following a Grotthuss mechanism. In Dugong dugon (Dugong), this protein is ATP synthase F(0) complex subunit a.